The primary structure comprises 74 residues: Exodeoxyribonuclease 7 small subunit (74 aa).

This sequence belongs to the XseB family. As to quaternary structure, heterooligomer composed of large and small subunits.

It is found in the cytoplasm. It catalyses the reaction Exonucleolytic cleavage in either 5'- to 3'- or 3'- to 5'-direction to yield nucleoside 5'-phosphates.. In terms of biological role, bidirectionally degrades single-stranded DNA into large acid-insoluble oligonucleotides, which are then degraded further into small acid-soluble oligonucleotides. The chain is Exodeoxyribonuclease 7 small subunit from Clostridium beijerinckii (strain ATCC 51743 / NCIMB 8052) (Clostridium acetobutylicum).